Here is a 174-residue protein sequence, read N- to C-terminus: MARKNQKAPWEPEEEIIWVSKTEMKTDMDALQKLGEELVDLKPSVLDKFPLSEDLAQAIKDAQRFKNEAKRRQLQYIGKVMRSVDPEPIQAALDKIRNKHSQATVELHKLEQLRDRVVAEGDAAISDVMEMYPEADRQRLRQLARQANKEKAANKPAKSSREIFQILKELKLGD.

It belongs to the DarP family.

The protein resides in the cytoplasm. In terms of biological role, member of a network of 50S ribosomal subunit biogenesis factors which assembles along the 30S-50S interface, preventing incorrect 23S rRNA structures from forming. Promotes peptidyl transferase center (PTC) maturation. The chain is Dual-action ribosomal maturation protein DarP from Vibrio atlanticus (strain LGP32) (Vibrio splendidus (strain Mel32)).